The chain runs to 722 residues: Pre-B-cell leukemia transcription factor-interacting protein 1 (722 aa).

Over residues 1–10 (MASCPDSDNS) the composition is skewed to polar residues. A disordered region spans residues 1–180 (MASCPDSDNS…TAAVDGEDQA (180 aa)). A compositionally biased stretch (basic and acidic residues) spans 88 to 97 (DDGHGTKRPG). Ser-133, Ser-144, Ser-145, and Ser-146 each carry phosphoserine. Thr-150 bears the Phosphothreonine mark. Ser-166 carries the phosphoserine modification. Coiled coils occupy residues 266 to 346 (LLLD…RGVD) and 373 to 401 (DTSLLEQHKQLEAEAKALRQELQKQWQLL). Residues 442-453 (QGINTGRSSNDS) show a composition bias toward polar residues. Disordered regions lie at residues 442–562 (QGIN…SPDS) and 691–722 (RRSKKKEKQPWNHRAVGPREEHSRHPHHYHQG). 2 stretches are compositionally biased toward basic and acidic residues: residues 465 to 536 (HPRE…DPKV) and 546 to 559 (SGERQKHSWGKDNS). Residues 482-502 (QKAEHWKLKKEESGQDRKKSW) carry the Nuclear localization signal motif. Ser-559 carries the phosphoserine modification. The Nuclear localization signal motif lies at 686 to 711 (DKALKRRSKKKEKQPWNHRAVGPREE).

As to quaternary structure, interacts with ESR1, PBX1, PBX2 and PBX3. Interacts with TEX11.

Its subcellular location is the cytoplasm. The protein localises to the cytoskeleton. It is found in the nucleus. Functionally, regulator of pre-B-cell leukemia transcription factors (BPXs) function. Inhibits the binding of PBX1-HOX complex to DNA and blocks the transcriptional activity of E2A-PBX1. Tethers estrogen receptor-alpha (ESR1) to microtubules and allows them to influence estrogen receptors-alpha signaling. The sequence is that of Pre-B-cell leukemia transcription factor-interacting protein 1 (Pbxip1) from Rattus norvegicus (Rat).